Consider the following 295-residue polypeptide: Small ribosomal subunit protein uS2 (295 aa).

It belongs to the universal ribosomal protein uS2 family.

In Rickettsia canadensis (strain McKiel), this protein is Small ribosomal subunit protein uS2.